The sequence spans 446 residues: MSFPHFGHPYRGASQFLASASSSTTCCESTQRSVSDVASGSTPAPALCCAPYDSRLLGSARPELGAALGIYGAPYAAAAAAQSYPGYLPYSPEPPSLYGALNPQYEFKEAAGSFTSSLAQPGAYYPYERTLGQYQYERYGAVELSGAGRRKNATRETTSTLKAWLNEHRKNPYPTKGEKIMLAIITKMTLTQVSTWFANARRRLKKENKMTWAPKNKGGEERKAEGGEEDSLGCLTADTKEVTASQEARGLRLSDLEDLEEEEEEEEEAEDEEVVATAGDRLTEFRKGAQSLPGPCAAAREGRLERRECGLAAPRFSFNDPSGSEEADFLSAETGSPRLTMHYPCLEKPRIWSLAHTATASAVEGAPPARPRPRSPECRMIPGQPPASARRLSVPRDSACDESSCIPKAFGNPKFALQGLPLNCAPCPRRSEPVVQCQYPSGAEAG.

Positions 146 to 208 (GAGRRKNATR…NARRRLKKEN (63 aa)) form a DNA-binding region, homeobox. Disordered regions lie at residues 208 to 273 (NKMT…EDEE) and 362 to 394 (AVEG…RLSV). Positions 217–226 (KGGEERKAEG) are enriched in basic and acidic residues. A compositionally biased stretch (acidic residues) spans 256 to 273 (LEDLEEEEEEEEEAEDEE).

Belongs to the TALE/IRO homeobox family.

It localises to the nucleus. Transcription factor. Binds to the iroquois binding site (IBS) motif of target genes to regulate gene expression; functions as a transcriptional activator or repressor. Modulates expression of RCVRN, VSX1, BHLHE22/BHLHB5 and TACR3/Nk3r. Required downstream of retinal bipolar cell specification for the terminal differentiation of type 2, type 3a and possibly type 6 bipolar cells. This Homo sapiens (Human) protein is Iroquois-class homeodomain protein IRX-6 (IRX6).